The primary structure comprises 298 residues: MSADSSDAAHPSGLARVPDFLRLTRLDRPIGTWLLMWPTLWALWLAAEGIPERGTLLIFVIGVYVMRAAGCVVNDYADRHFDGHVKRTRDRPLATGRITEKEAKVLFAGLVIIAFGLVCLTNLPTVLLSFAALALAATYPFMKRYTHFPQVVLGAAFSWGIPMAFMAIQRQVPLEAWLLLAANVAWTVAYDTEYAMVDRDDDLKVGIKSTAVLFGRADRLMIGLLQALTLLLLAWVGLRLALGGFFWLGLAAMGAIFVFQHRLIRHRERDHCFRAFLNNHWAGLVVFAGIALSLWPML.

The next 7 membrane-spanning stretches (helical) occupy residues 30 to 50 (IGTW…AEGI), 54 to 74 (GTLL…CVVN), 105 to 125 (VLFA…NLPT), 148 to 168 (FPQV…FMAI), 218 to 238 (DRLM…WVGL), 240 to 260 (LALG…FVFQ), and 275 to 295 (AFLN…LSLW).

This sequence belongs to the UbiA prenyltransferase family. Mg(2+) is required as a cofactor.

It localises to the cell inner membrane. It catalyses the reaction all-trans-octaprenyl diphosphate + 4-hydroxybenzoate = 4-hydroxy-3-(all-trans-octaprenyl)benzoate + diphosphate. Its pathway is cofactor biosynthesis; ubiquinone biosynthesis. Catalyzes the prenylation of para-hydroxybenzoate (PHB) with an all-trans polyprenyl group. Mediates the second step in the final reaction sequence of ubiquinone-8 (UQ-8) biosynthesis, which is the condensation of the polyisoprenoid side chain with PHB, generating the first membrane-bound Q intermediate 3-octaprenyl-4-hydroxybenzoate. In Chromohalobacter salexigens (strain ATCC BAA-138 / DSM 3043 / CIP 106854 / NCIMB 13768 / 1H11), this protein is 4-hydroxybenzoate octaprenyltransferase.